The chain runs to 337 residues: MRVLGIETSCDETGVAIYDTEAGLLANQLYSQVKLHADYGGVVPELASRDHVRKTVPLIQAALREAGLQADDIDGVAYTAGPGLVGALLVGATVGRSLAFAWEVPAVPVHHMEGHLLAPMLEDNPPAFPFVALLVSGGHTQLISVTGIGEYRLLGESVDDAAGEAFDKTAKLLGLDYPGGPMLSKMAQAGDSQRFTFPRPMTDRPGLDFSFSGLKTFAANTIRSNGDDDQTRADIARAFEDAVVDTLAIKCRRALDDTGFKRLVMAGGVSANRTLRQRLGEVMAKRGGEVFYARPEFCTDNGAMIAYAGSVRLLHGASQTLGVSVRPRWPLADLPAV.

Residues His111 and His115 each coordinate Fe cation. Residues 134–138 (LVSGG), Asp167, Gly180, and Asn272 contribute to the substrate site. Fe cation is bound at residue Asp300.

The protein belongs to the KAE1 / TsaD family. Fe(2+) is required as a cofactor.

It is found in the cytoplasm. It catalyses the reaction L-threonylcarbamoyladenylate + adenosine(37) in tRNA = N(6)-L-threonylcarbamoyladenosine(37) in tRNA + AMP + H(+). In terms of biological role, required for the formation of a threonylcarbamoyl group on adenosine at position 37 (t(6)A37) in tRNAs that read codons beginning with adenine. Is involved in the transfer of the threonylcarbamoyl moiety of threonylcarbamoyl-AMP (TC-AMP) to the N6 group of A37, together with TsaE and TsaB. TsaD likely plays a direct catalytic role in this reaction. The chain is tRNA N6-adenosine threonylcarbamoyltransferase from Pectobacterium atrosepticum (strain SCRI 1043 / ATCC BAA-672) (Erwinia carotovora subsp. atroseptica).